The chain runs to 327 residues: DNA repair protein XRCC4 (327 aa).

The segment at 1–211 (MERKVSRISL…QLEKNLKPER (211 aa)) is interaction with IFFO1. The residue at position 53 (serine 53) is a Phosphoserine. 2 coiled-coil regions span residues 133 to 153 (IAEK…LLRD) and 183 to 213 (LNEK…ERET). 2 interaction with LIG4 regions span residues 179-210 (FILV…LKPE) and 179-211 (FILV…KPER). Serine 192 is modified (phosphoserine). Lysine 208 participates in a covalent cross-link: Glycyl lysine isopeptide (Lys-Gly) (interchain with G-Cter in SUMO). Tyrosine 226 carries the post-translational modification Phosphotyrosine. A Phosphoserine modification is found at serine 229. Residue threonine 230 is modified to Phosphothreonine. 2 positions are modified to phosphoserine: serine 249 and serine 253. A disordered region spans residues 255–327 (DVTDIAPSRK…RNSSPEDIFD (73 aa)). A Nuclear localization signal motif is present at residues 263-268 (RKRRHH). A Glycyl lysine isopeptide (Lys-Gly) (interchain with G-Cter in ubiquitin) cross-link involves residue lysine 289. 4 positions are modified to phosphoserine: serine 294, serine 295, serine 308, and serine 313. Polar residues predominate over residues 308-327 (SAGNMSLETLRNSSPEDIFD). At threonine 316 the chain carries Phosphothreonine. Phosphoserine occurs at positions 320 and 321.

This sequence belongs to the XRCC4-XLF family. XRCC4 subfamily. As to quaternary structure, homodimer and homotetramer in solution. Interacts with NHEJ1/XLF; the interaction is direct and is mediated via a head-to-head interaction between N-terminal head regions. Interacts with LIG4; the LIG4-XRCC4 subcomplex has a 1:2 stoichiometry and XRCC4 is required for LIG4 stability. Component of the core long-range non-homologous end joining (NHEJ) complex (also named DNA-PK complex) composed of PRKDC, LIG4, XRCC4, XRCC6/Ku70, XRCC5/Ku86 and NHEJ1/XLF. Additional component of the NHEJ complex includes PAXX. Following autophosphorylation, PRKDC dissociates from DNA, leading to formation of the short-range NHEJ complex, composed of LIG4, XRCC4, XRCC6/Ku70, XRCC5/Ku86 and NHEJ1/XLF. Interacts with PRKDC; the interaction is direct. Interacts with XRCC6/Ku70; the interaction is direct. Interacts with APTX and APLF. Forms a heterotetramer with IFFO1; the interaction involves LIG4-free XRCC4 and leads to the relocalization of IFFO1 to the sites of DNA damage. Interacts with PNKP; mainly interacts with PNKP when phosphorylated at Thr-230, but is also able to interact at much lower level with PNKP when not unphosphorylated. Interacts with POLL (DNA polymerase lambda). In terms of assembly, interacts with XKR4; interacts with the processed form of XKR4, which is cleaved by caspase. Phosphorylated by PRKDC at the C-terminus in response to DNA damage; Ser-253 constitutes the main phosphorylation sites. Phosphorylations by PRKDC at the C-terminus of XRCC4 and NHEJ1/XLF are highly redundant and regulate ability of the XRCC4-NHEJ1/XLF subcomplex to bridge DNA. Phosphorylation by PRKDC does not prevent interaction with NHEJ1/XLF but disrupts ability to bridge DNA and promotes detachment from DNA. Phosphorylation at Ser-320 and Ser-321 by PRKDC promotes recognition by the SCF(FBXW7) complex and subsequent ubiquitination via 'Lys-63'-linked ubiquitin. Phosphorylation at Thr-230 by CK2 promotes interaction with PNKP; regulating PNKP activity and localization to DNA damage sites. Phosphorylation by CK2 promotes interaction with APTX. Post-translationally, ubiquitinated at Lys-289 by the SCF(FBXW7) complex via 'Lys-63'-linked ubiquitination, thereby promoting double-strand break repair: the SCF(FBXW7) complex specifically recognizes XRCC4 when phosphorylated at Ser-320 and Ser-321 by PRKDC, and 'Lys-63'-linked ubiquitination facilitates DNA non-homologous end joining (NHEJ) by enhancing association with XRCC5/Ku80 and XRCC6/Ku70. Monoubiquitinated. In terms of processing, undergoes proteolytic processing by caspase-3 (CASP3). This generates the protein XRCC4, C-terminus (XRCC4/C), which translocates to the cytoplasm and activates phospholipid scramblase activity of XKR4, thereby promoting phosphatidylserine exposure on apoptotic cell surface.

The protein resides in the nucleus. It is found in the chromosome. It localises to the cytoplasm. In terms of biological role, DNA non-homologous end joining (NHEJ) core factor, required for double-strand break repair and V(D)J recombination. Acts as a scaffold protein that regulates recruitment of other proteins to DNA double-strand breaks (DSBs). Associates with NHEJ1/XLF to form alternating helical filaments that bridge DNA and act like a bandage, holding together the broken DNA until it is repaired. The XRCC4-NHEJ1/XLF subcomplex binds to the DNA fragments of a DSB in a highly diffusive manner and robustly bridges two independent DNA molecules, holding the broken DNA fragments in close proximity to one other. The mobility of the bridges ensures that the ends remain accessible for further processing by other repair factors. Plays a key role in the NHEJ ligation step of the broken DNA during DSB repair via direct interaction with DNA ligase IV (LIG4): the LIG4-XRCC4 subcomplex reseals the DNA breaks after the gap filling is completed. XRCC4 stabilizes LIG4, regulates its subcellular localization and enhances LIG4's joining activity. Binding of the LIG4-XRCC4 subcomplex to DNA ends is dependent on the assembly of the DNA-dependent protein kinase complex DNA-PK to these DNA ends. Promotes displacement of PNKP from processed strand break termini. Acts as an activator of the phospholipid scramblase activity of XKR4. This form, which is generated upon caspase-3 (CASP3) cleavage, translocates into the cytoplasm and interacts with XKR4, thereby promoting phosphatidylserine scramblase activity of XKR4 and leading to phosphatidylserine exposure on apoptotic cell surface. This Cricetulus griseus (Chinese hamster) protein is DNA repair protein XRCC4.